A 218-amino-acid chain; its full sequence is Octanoyltransferase (218 aa).

Residues 30–212 enclose the BPL/LPL catalytic domain; sequence ENTADEIWLV…HFYNILGYNA (183 aa). Residues 69–76, 141–143, and 154–156 each bind substrate; these read RGGQITYH, SLG, and GLA. Residue Cys-172 is the Acyl-thioester intermediate of the active site.

This sequence belongs to the LipB family.

It is found in the cytoplasm. It carries out the reaction octanoyl-[ACP] + L-lysyl-[protein] = N(6)-octanoyl-L-lysyl-[protein] + holo-[ACP] + H(+). It functions in the pathway protein modification; protein lipoylation via endogenous pathway; protein N(6)-(lipoyl)lysine from octanoyl-[acyl-carrier-protein]: step 1/2. Its function is as follows. Catalyzes the transfer of endogenously produced octanoic acid from octanoyl-acyl-carrier-protein onto the lipoyl domains of lipoate-dependent enzymes. Lipoyl-ACP can also act as a substrate although octanoyl-ACP is likely to be the physiological substrate. The protein is Octanoyltransferase of Actinobacillus pleuropneumoniae serotype 5b (strain L20).